The sequence spans 661 residues: DNA cross-link repair protein PSO2/SNM1 (661 aa).

The disordered stretch occupies residues 1–44 (MSRKSIVQIRRSEVKRKRSSTASSTSEGKTLHKNTHTSSKRQRT). Residues 31–43 (LHKNTHTSSKRQR) show a composition bias toward basic residues. The segment at 144–174 (VIQCPICLENLSHLELYERETHCDTCIGSDP) adopts a UBZ4-type zinc-finger fold. Zn(2+) contacts are provided by C147, C150, H165, and C169.

This sequence belongs to the DNA repair metallo-beta-lactamase (DRMBL) family.

The protein localises to the nucleus. Required for DNA interstrand cross-link repair. This requires cleavage of cross-linked DNA to generate DNA double strand breaks (DSBs). This protein has 5' exonuclease activity on single-stranded and double-stranded DNA, which appears to be necessary for the processing of DNA double strand breaks prior to ligation. The protein is DNA cross-link repair protein PSO2/SNM1 (PSO2) of Saccharomyces cerevisiae (strain ATCC 204508 / S288c) (Baker's yeast).